The chain runs to 233 residues: 7-cyano-7-deazaguanine synthase (233 aa).

7 to 17 contacts ATP; sequence CSGGLDSVSLA. Positions 185, 193, 196, and 199 each coordinate Zn(2+).

This sequence belongs to the QueC family. Requires Zn(2+) as cofactor.

It carries out the reaction 7-carboxy-7-deazaguanine + NH4(+) + ATP = 7-cyano-7-deazaguanine + ADP + phosphate + H2O + H(+). The protein operates within purine metabolism; 7-cyano-7-deazaguanine biosynthesis. Its function is as follows. Catalyzes the ATP-dependent conversion of 7-carboxy-7-deazaguanine (CDG) to 7-cyano-7-deazaguanine (preQ(0)). The chain is 7-cyano-7-deazaguanine synthase from Paracoccus denitrificans (strain Pd 1222).